We begin with the raw amino-acid sequence, 452 residues long: AP-4 complex subunit mu-1 (452 aa).

The 268-residue stretch at 184 to 451 folds into the MHD domain; it reads KNEVFLDVVE…LSHSDAYVIR (268 aa).

It belongs to the adaptor complexes medium subunit family. As to quaternary structure, adaptor protein complex 4 (AP-4) is a heterotetramer composed of two large adaptins (epsilon-type subunit AP4E1 and beta-type subunit AP4B1), a medium adaptin (mu-type subunit AP4M1) and a small adaptin (sigma-type AP4S1). Interacts with tyrosine-based sorting signals on the cytoplasmic tail of cargo proteins such as APP, ATG9A, LAMP2 and NAGPA. Interacts with the C-terminal domain of GRID2. Interacts with GRIA1 and GRIA2; the interaction is indirect via CACNG3. Interacts with CACNG3; CACNG3 associates GRIA1 and GRIA2 with the adaptor protein complex 4 (AP-4) to target them to the somatodendritic compartment of neurons. Interacts with HOOK1 and HOOK2; the interactions are direct, mediate the interaction between FTS-Hook-FHIP (FHF) complex and AP-4 and the perinuclear distribution of AP-4.

The protein localises to the golgi apparatus. The protein resides in the trans-Golgi network membrane. It is found in the early endosome. Component of the adaptor protein complex 4 (AP-4). Adaptor protein complexes are vesicle coat components involved both in vesicle formation and cargo selection. They control the vesicular transport of proteins in different trafficking pathways. AP-4 forms a non clathrin-associated coat on vesicles departing the trans-Golgi network (TGN) and may be involved in the targeting of proteins from the trans-Golgi network (TGN) to the endosomal-lysosomal system. It is also involved in protein sorting to the basolateral membrane in epithelial cells and the proper asymmetric localization of somatodendritic proteins in neurons. Within AP-4, the mu-type subunit AP4M1 is directly involved in the recognition and binding of tyrosine-based sorting signals found in the cytoplasmic part of cargos. The adaptor protein complex 4 (AP-4) may also recognize other types of sorting signal. The sequence is that of AP-4 complex subunit mu-1 from Bos taurus (Bovine).